We begin with the raw amino-acid sequence, 159 residues long: CASP-like protein 1C1 (159 aa).

The Cytoplasmic segment spans residues 1–6; it reads MAKIKR. The chain crosses the membrane as a helical span at residues 7–27; that stretch reads IITTLVRLLVLGAALSATIVM. Over 28–50 the chain is Extracellular; it reads VTSHDSAEVLNLSFDAKYTNARA. Residue asparagine 38 is glycosylated (N-linked (GlcNAc...) asparagine). A helical transmembrane segment spans residues 51–73; it reads FVYFAITNAIASGYSFIALFLSF. Topologically, residues 74–86 are cytoplasmic; it reads STPLWHLVFLLDV. The helical transmembrane segment at 87 to 107 threads the bilayer; sequence FMTLLLTSSISVALAIADVGK. Over 108 to 130 the chain is Extracellular; that stretch reads KGNSHAGWLPVCGQVPEFCDHVT. A helical membrane pass occupies residues 131–151; it reads GALIAGFSAAVLYLVLLLFSI. At 152–159 the chain is on the cytoplasmic side; the sequence is HAVLNPKP.

This sequence belongs to the Casparian strip membrane proteins (CASP) family. As to quaternary structure, homodimer and heterodimers.

The protein localises to the cell membrane. The polypeptide is CASP-like protein 1C1 (Vitis vinifera (Grape)).